The following is a 165-amino-acid chain: Nucleotide-binding protein PMT9312_0481 (165 aa).

This sequence belongs to the YajQ family.

Nucleotide-binding protein. The polypeptide is Nucleotide-binding protein PMT9312_0481 (Prochlorococcus marinus (strain MIT 9312)).